The sequence spans 370 residues: Prolactin-releasing peptide receptor (370 aa).

The tract at residues 1-34 (MTSLPPGTTGDPDLFSGPSPAGSTPANQSAEASE) is disordered. Residues 1 to 62 (MTSLPPGTTG…LQLVHQLKGL (62 aa)) lie on the Extracellular side of the membrane. The span at 21–34 (AGSTPANQSAEASE) shows a compositional bias: polar residues. 2 N-linked (GlcNAc...) asparagine glycosylation sites follow: Asn-27 and Asn-36. A helical transmembrane segment spans residues 63–83 (IVMLYSIVVVVGLVGNCLLVL). Residues 84 to 101 (VIARVRRLHNVTNFLIGN) lie on the Cytoplasmic side of the membrane. A helical transmembrane segment spans residues 102-122 (LALSDVLMCAACVPLTLAYAF). Topologically, residues 123 to 126 (EPRG) are extracellular. The chain crosses the membrane as a helical span at residues 127-147 (WVFGGGLCHLVFFLQPVTVYV). A disulfide bridge links Cys-134 with Cys-211. The Cytoplasmic portion of the chain corresponds to 148-175 (SVFTLTTIAVDRYVVLVHPLRRRISLKL). The helical transmembrane segment at 176–196 (SAYAVLGIWALSAVLALPAAV) threads the bilayer. The Extracellular portion of the chain corresponds to 197–223 (HTYHVELKPHDVRLCEEFWGSQERQRQ). Residues 224-244 (IYAWGLLLGTYLLPLLAILLS) form a helical membrane-spanning segment. At 245–276 (YVRVSVKLRNRVVPGSVTQSQADWDRARRRRT) the chain is on the cytoplasmic side. A helical transmembrane segment spans residues 277 to 297 (FCLLVVVVVVFALCWLPLHIF). At 298–317 (NLLRDLDPRAIDPYAFGLVQ) the chain is on the extracellular side. The helical transmembrane segment at 318–338 (LLCHWLAMSSACYNPFIYAWL) threads the bilayer. The Cytoplasmic portion of the chain corresponds to 339 to 370 (HDSFREELRKMLLSWPRKIVPHGQNMTVSVVI). The interval 365-370 (TVSVVI) is required for interaction with GRIP1, GRIP2 and PICK1.

The protein belongs to the G-protein coupled receptor 1 family. As to quaternary structure, interacts through its C-terminal region with the PDZ domain-containing proteins GRIP1, GRIP2 and PICK1. Interacts with PDZ domains 4 and 5 of GRIP1 and with the PDZ domain of PICK1. Widely expressed, with highest levels in pituitary, cerebellum, and hypothalamus.

The protein resides in the cell membrane. Functionally, receptor for prolactin-releasing peptide (PrRP). Implicated in lactation, regulation of food intake and pain-signal processing. The chain is Prolactin-releasing peptide receptor (Prlhr) from Rattus norvegicus (Rat).